The chain runs to 375 residues: Delta(12) fatty acid dehydrogenase (375 aa).

2 helical membrane-spanning segments follow: residues 54-74 (IIAYIFYFLADKYIPILPAPL) and 77-97 (LAWPLYWFCQASILTGLWVIG). The Histidine box-1 signature appears at 98-102 (HECGH). Residues 110-130 (WVDDTVGFILHSFLMTPYFSW) form a helical membrane-spanning segment. Positions 134–138 (HRNHH) match the Histidine box-2 motif. The next 3 membrane-spanning stretches (helical) occupy residues 172 to 192 (LLIMFITFTLGFPLYLFTNIS), 218 to 238 (VLLSDLGLLAVLYGVKLAVAA), and 242 to 262 (AWVTCIYGIPVLGVFIFFDII). Positions 308–312 (HVMHH) match the Histidine box-3 motif.

The protein belongs to the fatty acid desaturase type 1 family. Fe cation serves as cofactor. In terms of tissue distribution, seed.

The protein resides in the membrane. It carries out the reaction a (9Z,12Z)-octadecadienoyl-containing glycerolipid + 2 Fe(II)-[cytochrome b5] + O2 + 2 H(+) = a (9Z)-octadec-9-en-12-ynoyl-containing glycerolipid + 2 Fe(III)-[cytochrome b5] + 2 H2O. Its pathway is lipid metabolism; polyunsaturated fatty acid biosynthesis. Functionally, changes the delta-12 double bond of linoleic acid into a triple bond in the biosynthesis of crepenynic acid. The sequence is that of Delta(12) fatty acid dehydrogenase from Crepis alpina (Hawksbeard).